We begin with the raw amino-acid sequence, 620 residues long: 1-deoxy-D-xylulose-5-phosphate synthase (620 aa).

Residues H80 and 121 to 123 contribute to the thiamine diphosphate site; that span reads GHS. D152 contributes to the Mg(2+) binding site. Thiamine diphosphate-binding positions include 153 to 154, N181, Y288, and E370; that span reads GA. A Mg(2+)-binding site is contributed by N181.

The protein belongs to the transketolase family. DXPS subfamily. In terms of assembly, homodimer. The cofactor is Mg(2+). Thiamine diphosphate is required as a cofactor.

The catalysed reaction is D-glyceraldehyde 3-phosphate + pyruvate + H(+) = 1-deoxy-D-xylulose 5-phosphate + CO2. It functions in the pathway metabolic intermediate biosynthesis; 1-deoxy-D-xylulose 5-phosphate biosynthesis; 1-deoxy-D-xylulose 5-phosphate from D-glyceraldehyde 3-phosphate and pyruvate: step 1/1. In terms of biological role, catalyzes the acyloin condensation reaction between C atoms 2 and 3 of pyruvate and glyceraldehyde 3-phosphate to yield 1-deoxy-D-xylulose-5-phosphate (DXP). The sequence is that of 1-deoxy-D-xylulose-5-phosphate synthase from Escherichia coli O157:H7.